Consider the following 51-residue polypeptide: Suberization-associated anionic peroxidase 1 (51 aa).

Histidine 30 provides a ligand contact to heme. Position 31 (threonine 31) interacts with Ca(2+).

Belongs to the peroxidase family. Classical plant (class III) peroxidase subfamily. The cofactor is heme b. Ca(2+) is required as a cofactor.

The protein resides in the secreted. The enzyme catalyses 2 a phenolic donor + H2O2 = 2 a phenolic radical donor + 2 H2O. Removal of H(2)O(2), oxidation of toxic reductants, biosynthesis and degradation of lignin, suberization, auxin catabolism, response to environmental stresses such as wounding, pathogen attack and oxidative stress. These functions might be dependent on each isozyme/isoform in each plant tissue. In terms of biological role, suggested to catalyze the deposition of the aromatic residues of suberin on the cell wall and thus play a role in cell-suberization. This is Suberization-associated anionic peroxidase 1 from Capsicum annuum (Capsicum pepper).